Reading from the N-terminus, the 315-residue chain is MSFASETKKELTQIEADNHCMKAEVSALIRMNGSLSFANKQLSLDVQTENAAIARRLYTIMKKLYPYNVELLVRKKMRLKKNNVYICRVREGARELLIDLEIISDDFQFNHTISRKLIKKNGQKRAYLRGAFLAGGSVNNPETSAYHLEIYSLYKEHGEALMDLMNEFELNAKTIERKKGFVTYLKEAEKISDFLNIVGAHQAMMKFEDVRILRDMRNSVNRIVNCETANLNKTIGAALRQVENIRFIENSIGLDQLPEKLREIARLRVEYQDVTLKELGEMVSSGTVSKSGVNHRLRKIDEIADALRRGEKIGG.

Residues 275 to 309 constitute a DNA-binding region (H-T-H motif); sequence TLKELGEMVSSGTVSKSGVNHRLRKIDEIADALRR.

This sequence belongs to the WhiA family.

Its function is as follows. Involved in cell division and chromosome segregation. In Lysinibacillus sphaericus (strain C3-41), this protein is Probable cell division protein WhiA.